A 544-amino-acid chain; its full sequence is Flagellar hook-associated protein 1 (544 aa).

This sequence belongs to the flagella basal body rod proteins family.

It is found in the secreted. The protein resides in the bacterial flagellum. This is Flagellar hook-associated protein 1 (flgK) from Buchnera aphidicola subsp. Schizaphis graminum (strain Sg).